The primary structure comprises 651 residues: DNA topoisomerase 3 (651 aa).

One can recognise a Toprim domain in the interval 1–134 (MRLFIAEKPS…KRDKILRCLI (134 aa)). Glu7, Asp103, and Asp105 together coordinate Mg(2+). The region spanning 155-612 (FIPLATSALA…NLNQILPDLV (458 aa)) is the Topo IA-type catalytic domain. Positions 194 to 199 (SVGRVQ) are interaction with DNA. The active-site O-(5'-phospho-DNA)-tyrosine intermediate is Tyr337. A disordered region spans residues 631 to 651 (SDRAKPKSAVKKSSKSNGETD).

Belongs to the type IA topoisomerase family. The cofactor is Mg(2+).

The catalysed reaction is ATP-independent breakage of single-stranded DNA, followed by passage and rejoining.. In terms of biological role, releases the supercoiling and torsional tension of DNA, which is introduced during the DNA replication and transcription, by transiently cleaving and rejoining one strand of the DNA duplex. Introduces a single-strand break via transesterification at a target site in duplex DNA. The scissile phosphodiester is attacked by the catalytic tyrosine of the enzyme, resulting in the formation of a DNA-(5'-phosphotyrosyl)-enzyme intermediate and the expulsion of a 3'-OH DNA strand. The free DNA strand then undergoes passage around the unbroken strand, thus removing DNA supercoils. Finally, in the religation step, the DNA 3'-OH attacks the covalent intermediate to expel the active-site tyrosine and restore the DNA phosphodiester backbone. The protein is DNA topoisomerase 3 of Haemophilus influenzae (strain ATCC 51907 / DSM 11121 / KW20 / Rd).